We begin with the raw amino-acid sequence, 690 residues long: NF-kappa-B-repressing factor (690 aa).

Residues 1–296 form an active repression domain region; sequence MEKILHMAEG…FKHIIGEDLV (296 aa). A Nuclear localization signal motif is present at residues 25-45; that stretch reads KPSKGQKRYLSTYDGQNPPKK. Disordered stretches follow at residues 27–49, 65–85, and 133–160; these read SKGQKRYLSTYDGQNPPKKQAGS, SSSKAERQEDPYGPQTKDVNG, and YFDSGNPAPSSTSQQANCQPAPEPPPSQ. Residue K68 forms a Glycyl lysine isopeptide (Lys-Gly) (interchain with G-Cter in SUMO2) linkage. The segment covering 139–150 has biased composition (polar residues); sequence PAPSSTSQQANC. The DNA-binding element occupies 296 to 388; sequence VVCQIGMLSY…RVFLQDHCLA (93 aa). The span at 414 to 425 shows a compositional bias: polar residues; it reads PTYPSVKSSQCH. The disordered stretch occupies residues 414–436; the sequence is PTYPSVKSSQCHSGSSPKGSGKK. K500 is covalently cross-linked (Glycyl lysine isopeptide (Lys-Gly) (interchain with G-Cter in SUMO2)). Positions 551 to 596 constitute a G-patch domain; the sequence is EDNIGNQLLRKMGWTGGGLGKSGEGIREPISVKEQHKREGLGLDVE. The region spanning 600-664 is the R3H domain; that stretch reads KIAKRDIEQI…DRYLVVGRKR (65 aa). S618 is modified (phosphoserine). Glycyl lysine isopeptide (Lys-Gly) (interchain with G-Cter in SUMO2) cross-links involve residues K666 and K674.

Interacts with NF-kappa-B. Interacts with XRN2. Interacts (via G-patch domain) with DHX15; promoting the RNA helicase activity of DHX15.

It localises to the nucleus. It is found in the nucleolus. Functionally, enhances the ATPase activity of DHX15 by acting like a brace that tethers mobile sections of DHX15 together, stabilizing a functional conformation with high RNA affinity of DHX15. Involved in the constitutive silencing of the interferon beta promoter, independently of the virus-induced signals, and in the inhibition of the basal and cytokine-induced iNOS promoter activity. Also involved in the regulation of IL-8 transcription. May also act as a DNA-binding transcription regulator: interacts with a specific negative regulatory element (NRE) 5'-AATTCCTCTGA-3' to mediate transcriptional repression of certain NK-kappa-B responsive genes. This chain is NF-kappa-B-repressing factor (Nkrf), found in Mus musculus (Mouse).